We begin with the raw amino-acid sequence, 663 residues long: Transketolase 2 (663 aa).

His-25 is a binding site for substrate. Residues His-65 and 113 to 115 (GPL) contribute to the thiamine diphosphate site. Asp-154 is a binding site for Mg(2+). Thiamine diphosphate-binding residues include Gly-155 and Asn-184. Asn-184 and Ile-186 together coordinate Mg(2+). Substrate-binding residues include His-259, Arg-356, and Ser-383. Thiamine diphosphate is bound at residue His-259. Glu-410 acts as the Proton donor in catalysis. Residue Phe-436 participates in thiamine diphosphate binding. Residues His-460, Asp-468, and Arg-519 each contribute to the substrate site.

This sequence belongs to the transketolase family. In terms of assembly, homodimer. It depends on Mg(2+) as a cofactor. The cofactor is Ca(2+). Requires Mn(2+) as cofactor. Co(2+) is required as a cofactor. Thiamine diphosphate serves as cofactor.

The enzyme catalyses D-sedoheptulose 7-phosphate + D-glyceraldehyde 3-phosphate = aldehydo-D-ribose 5-phosphate + D-xylulose 5-phosphate. In terms of biological role, catalyzes the transfer of a two-carbon ketol group from a ketose donor to an aldose acceptor, via a covalent intermediate with the cofactor thiamine pyrophosphate. This chain is Transketolase 2 (tkt2), found in Vibrio parahaemolyticus serotype O3:K6 (strain RIMD 2210633).